We begin with the raw amino-acid sequence, 496 residues long: MSIKLEISFSKSAKLNGGLAILLKTAEADSAAGAETVDPAGVIVKAARIARYSAKSMNGLDIVVPEGAPVDRIVVIGLGKAAELTAHDWLKAGGAAASRIKNTDKAAVFIDVPGLTTSPRAAADFALGMLLRAYSFDTYKTKKGDEEEKPAKSVKVTIVTADPAGAKKAFSDSEAIAGGVNLARDLVNEPPNVLGPVEFAAKAKELEKLGVEVEILTEREMRRLGMGALLGVAQGSVRPPRLAVMQWKGGKGKDRPVAFIGKGVVFDTGGISIKPAAGMEDMKGDMGGAAAVTGLMHVLASRKAAVNAVGIIGLVENMPDGNAQRPGDIVTSMSGQTIEVINTDAEGRLVLCDALWYCNDRFKPQFMINLATLTGAIIVALGNVHAGLFSNDDQLSAQLTAAGLSSNEKLWRMPLGRDYDKLIDSKFADMKNTGGRQAGSITAAHFLKRFVQDTPWAHLDIAGTAMGSPQDEINQSWGSGFGVRLLDELVRAHYES.

Lysine 262 and aspartate 267 together coordinate Mn(2+). Residue lysine 274 is part of the active site. Positions 285, 344, and 346 each coordinate Mn(2+). Arginine 348 is an active-site residue.

This sequence belongs to the peptidase M17 family. It depends on Mn(2+) as a cofactor.

The protein resides in the cytoplasm. It catalyses the reaction Release of an N-terminal amino acid, Xaa-|-Yaa-, in which Xaa is preferably Leu, but may be other amino acids including Pro although not Arg or Lys, and Yaa may be Pro. Amino acid amides and methyl esters are also readily hydrolyzed, but rates on arylamides are exceedingly low.. The enzyme catalyses Release of an N-terminal amino acid, preferentially leucine, but not glutamic or aspartic acids.. In terms of biological role, presumably involved in the processing and regular turnover of intracellular proteins. Catalyzes the removal of unsubstituted N-terminal amino acids from various peptides. The chain is Probable cytosol aminopeptidase from Rhizobium johnstonii (strain DSM 114642 / LMG 32736 / 3841) (Rhizobium leguminosarum bv. viciae).